Reading from the N-terminus, the 507-residue chain is Myocyte-specific enhancer factor 2D (507 aa).

The region spanning 3–57 (RKKIQIQRITDERNRQVTFTKRKFGLMKKAYELSVLCDCEIALIIFNHSNKLFQY) is the MADS-box domain. Residues 58–86 (ASTDMDKVLLKYTEYNEPHESRTNADIIE) constitute a DNA-binding region (mef2-type). Phosphoserine is present on residues serine 98, serine 106, serine 110, serine 121, and serine 180. The segment at 174-207 (TDPRLLSPQQPALQRNSVSPGLPQRPASAGAMLG) is disordered. A compositionally biased stretch (polar residues) spans 180 to 192 (SPQQPALQRNSVS). A Phosphoserine; by PKA modification is found at serine 190. The residue at position 231 (serine 231) is a Phosphoserine. 3 disordered regions span residues 244-267 (NKVIPAKSPPPPTHNTQLGAPSRK), 357-392 (WQQPQQPQQPQPPQPPQSQPQPPQPQPQQPPQQQPH), and 423-507 (SIKS…WTLK). Lysine 245 carries the N6-acetyllysine modification. Serine 251 is subject to Phosphoserine. A compositionally biased stretch (pro residues) spans 363 to 389 (PQQPQPPQPPQSQPQPPQPQPQQPPQQ). Lysine 425 bears the N6-acetyllysine; alternate mark. Lysine 425 participates in a covalent cross-link: Glycyl lysine isopeptide (Lys-Gly) (interchain with G-Cter in SUMO); alternate. Serine 430 carries the phosphoserine modification.

As to quaternary structure, forms a complex with class II HDACs in undifferentiating cells. On myogenic differentiation, HDACs are released into the cytoplasm allowing MEF2s to interact with other proteins for activation. Interacts with HDAC4 (in undifferentiating cells); the interaction translocates MEF2D to nuclear dots. Forms a heterodimer with MEF2A. Interacts with MAPK7; the interaction phosphorylates but does not activate MEF2D. Interacts with MYOG. Interacts with CCAR2 and HDAC3. In terms of processing, phosphorylated on Ser-430 by CDK5 is required for Lys-425 sumoylation and inhibits transcriptional activity. In neurons, enhanced CDK5 activity induced by neurotoxins promotes caspase 3-mediated cleavage leading to neuron apoptosis. Phosphorylation on Ser-180 can be enhanced by EGF. Phosphorylated and activated by CaMK4. Acetylated on Lys-425 by CREBBP. Acetylated by EP300. Deacetylated by SIRT1 and HDAC3. Post-translationally, sumoylated on Lys-425 with SUMO2 but not SUMO1; which inhibits transcriptional activity and myogenic activity. Desumoylated by SENP3.

The protein localises to the nucleus. Its function is as follows. Transcriptional activator which binds specifically to the MEF2 element, 5'-YTA[AT](4)TAR-3', found in numerous muscle-specific, growth factor- and stress-induced genes. Mediates cellular functions not only in skeletal and cardiac muscle development, but also in neuronal differentiation and survival. Plays diverse roles in the control of cell growth, survival and apoptosis via p38 MAPK signaling in muscle-specific and/or growth factor-related transcription. Plays a critical role in the regulation of neuronal apoptosis. This is Myocyte-specific enhancer factor 2D (Mef2d) from Rattus norvegicus (Rat).